Here is a 368-residue protein sequence, read N- to C-terminus: 3-dehydroquinate synthase (368 aa).

NAD(+)-binding positions include 99-103, 123-124, lysine 136, and lysine 145; these read GVVGD and TT. Zn(2+)-binding residues include glutamate 178, histidine 242, and histidine 259.

The protein belongs to the sugar phosphate cyclases superfamily. Dehydroquinate synthase family. It depends on NAD(+) as a cofactor. Co(2+) serves as cofactor. Zn(2+) is required as a cofactor.

Its subcellular location is the cytoplasm. It catalyses the reaction 7-phospho-2-dehydro-3-deoxy-D-arabino-heptonate = 3-dehydroquinate + phosphate. Its pathway is metabolic intermediate biosynthesis; chorismate biosynthesis; chorismate from D-erythrose 4-phosphate and phosphoenolpyruvate: step 2/7. Catalyzes the conversion of 3-deoxy-D-arabino-heptulosonate 7-phosphate (DAHP) to dehydroquinate (DHQ). This Chlorobaculum tepidum (strain ATCC 49652 / DSM 12025 / NBRC 103806 / TLS) (Chlorobium tepidum) protein is 3-dehydroquinate synthase.